We begin with the raw amino-acid sequence, 34 residues long: Photosystem II reaction center protein M (34 aa).

A helical membrane pass occupies residues 5-25; sequence ILAFIATALFILIPTAFLLIL.

It belongs to the PsbM family. In terms of assembly, PSII is composed of 1 copy each of membrane proteins PsbA, PsbB, PsbC, PsbD, PsbE, PsbF, PsbH, PsbI, PsbJ, PsbK, PsbL, PsbM, PsbT, PsbX, PsbY, PsbZ, Psb30/Ycf12, at least 3 peripheral proteins of the oxygen-evolving complex and a large number of cofactors. It forms dimeric complexes.

The protein resides in the plastid. The protein localises to the chloroplast thylakoid membrane. Its function is as follows. One of the components of the core complex of photosystem II (PSII). PSII is a light-driven water:plastoquinone oxidoreductase that uses light energy to abstract electrons from H(2)O, generating O(2) and a proton gradient subsequently used for ATP formation. It consists of a core antenna complex that captures photons, and an electron transfer chain that converts photonic excitation into a charge separation. This subunit is found at the monomer-monomer interface. In Anthoceros angustus (Hornwort), this protein is Photosystem II reaction center protein M.